We begin with the raw amino-acid sequence, 135 residues long: Galectin-1 (135 aa).

Ala2 carries the post-translational modification N-acetylalanine. The Galectin domain occupies Gly4–Glu135. 2 positions are modified to N6-acetyllysine: Lys13 and Lys29. Ser30 bears the Phosphoserine mark. Residues His45 to Arg49, His53, Asn62, and Trp69 to Glu72 contribute to the a beta-D-galactoside site. The residue at position 108 (Lys108) is an N6-acetyllysine; alternate. Position 108 is an N6-succinyllysine; alternate (Lys108). An N6-acetyllysine modification is found at Lys128.

In terms of assembly, homodimer. Binds LGALS3BP. Interacts with CD2, CD3, CD4, CD6, CD7, CD43, ALCAM and CD45. Interacts with laminin (via poly-N-acetyllactosamine). Interacts with SUSD2. Interacts with cargo receptor TMED10; the interaction mediates the translocation from the cytoplasm into the ERGIC (endoplasmic reticulum-Golgi intermediate compartment) and thereby secretion.

Its subcellular location is the secreted. The protein localises to the extracellular space. The protein resides in the extracellular matrix. It localises to the cytoplasm. Functionally, lectin that binds beta-galactoside and a wide array of complex carbohydrates. Plays a role in regulating apoptosis, cell proliferation and cell differentiation. Inhibits CD45 protein phosphatase activity and therefore the dephosphorylation of Lyn kinase. Strong inducer of T-cell apoptosis. This is Galectin-1 (LGALS1) from Ovis aries (Sheep).